The sequence spans 329 residues: Ribosomal RNA small subunit methyltransferase C (329 aa).

The protein belongs to the methyltransferase superfamily. RsmC family. Monomer.

Its subcellular location is the cytoplasm. It catalyses the reaction guanosine(1207) in 16S rRNA + S-adenosyl-L-methionine = N(2)-methylguanosine(1207) in 16S rRNA + S-adenosyl-L-homocysteine + H(+). In terms of biological role, specifically methylates the guanine in position 1207 of 16S rRNA in the 30S particle. In Actinobacillus pleuropneumoniae serotype 7 (strain AP76), this protein is Ribosomal RNA small subunit methyltransferase C.